We begin with the raw amino-acid sequence, 223 residues long: Serine/threonine/tyrosine-interacting protein (223 aa).

A Tyrosine-protein phosphatase domain is found at 28-176 (EMQEVLPGLF…LQEYEAIYLA (149 aa)). An Interaction with FBXW7 motif is present at residues 76–78 (FQQ). Phosphoserine occurs at positions 184 and 201. The segment at 199-223 (TGSVKRTHEEDDDFGNMQVATAQNG) is disordered.

It belongs to the protein-tyrosine phosphatase family. Non-receptor class subfamily. As to quaternary structure, interacts with MAPK1; independently of MAPK1 phosphorylation status. Interacts with CARHSP1/Crhsp-24. Interacts (via FQQ motif) with FBXW7 (via F-box domain); the interaction is direct and prevents FBXW7 interaction with SKP1, a component of the SCF(FBXW7) complex. In terms of tissue distribution, widely expressed with highest levels in muscle, testis and brain. In testis, expression starts 13-14 days after birth and is limited to the seminiferous tubule and to round and elongating spermatids. Expression is low in condensing spermatids and pachytene spermatocytes, and absent in spermatogonia, spermatozoa and somatic Sertoli cells.

It is found in the nucleus. The protein localises to the cytoplasm. It localises to the cytosol. Functionally, catalytically inactive phosphatase. Acts as a nuclear anchor for MAPK1/MAPK3 (ERK1/ERK2). Modulates cell-fate decisions and cell migration by spatiotemporal regulation of MAPK1/MAPK3 (ERK1/ERK2). By binding to the F-box of FBXW7, prevents the assembly of FBXW7 into the SCF E3 ubiquitin-protein ligase complex, and thereby inhibits degradation of its substrates. Plays a role in spermatogenesis. This chain is Serine/threonine/tyrosine-interacting protein, found in Mus musculus (Mouse).